Reading from the N-terminus, the 469-residue chain is MTSQLHKKGEAWSARFSEPMSELVKRYTSSVFFDKRLALVDIAGSLAHAGMLAAQKIISADDLAAIERGMAQIKGEIERGEFEWQLDLEDVHLNIEARLTALIGDAGKRLHTGRSRNDQVATDIRLWLRGEIDRIGGLLNDLRGALIDLAEQNADTILPGFTHLQVAQPVTFGHHLLAYVEMFSRDAERMRDCRARVNRLPLGAAALAGTSYPIDRHAVAKTLGFDGICANSLDAVSDRDFAIEFTAAAALVMTHVSRFSEELVLWMSPRVGFIDIADRFCTGSSIMPQKKNPDVPELARGKTGRVNGHLMALLTLMKGQPLAYNKDNQEDKEPLFDTVDTVADTLRIFAEMVAGITVKPDAMRAAALQGFSTATDLADYLVKRGLPFRDAHEAVAHAVKVCDARGIDLADLTLDEMKQELPNVAHLIGEDVFDYLTLEGSVASRNHPGGTAPDQVRAAAKAARAALGQ.

It belongs to the lyase 1 family. Argininosuccinate lyase subfamily.

The protein resides in the cytoplasm. The catalysed reaction is 2-(N(omega)-L-arginino)succinate = fumarate + L-arginine. The protein operates within amino-acid biosynthesis; L-arginine biosynthesis; L-arginine from L-ornithine and carbamoyl phosphate: step 3/3. The chain is Argininosuccinate lyase from Burkholderia mallei (strain NCTC 10247).